The following is a 364-amino-acid chain: Chorismate synthase (364 aa).

The tract at residues 41 to 60 (MQHDLDRRRPGTSRYTTARR) is disordered. NADP(+)-binding residues include arginine 48 and arginine 54. FMN contacts are provided by residues 125-127 (RSS), 238-239 (NA), glycine 278, 293-297 (KPTSS), and arginine 319.

It belongs to the chorismate synthase family. Homotetramer. The cofactor is FMNH2.

The enzyme catalyses 5-O-(1-carboxyvinyl)-3-phosphoshikimate = chorismate + phosphate. It functions in the pathway metabolic intermediate biosynthesis; chorismate biosynthesis; chorismate from D-erythrose 4-phosphate and phosphoenolpyruvate: step 7/7. In terms of biological role, catalyzes the anti-1,4-elimination of the C-3 phosphate and the C-6 proR hydrogen from 5-enolpyruvylshikimate-3-phosphate (EPSP) to yield chorismate, which is the branch point compound that serves as the starting substrate for the three terminal pathways of aromatic amino acid biosynthesis. This reaction introduces a second double bond into the aromatic ring system. This is Chorismate synthase from Shewanella sp. (strain ANA-3).